The primary structure comprises 406 residues: MLNNTLFFKQSEIHTISSYANRINDEVKSGDIGYYHLIDTSLNLIDESLQFIQDKEYVKNIVLVGMGGSSCGVKALRDMLFNEKSNQRELFILDNTSSHSFNKTLEKIKLEESLFLIISKTGSTIEVVSLFKLLIEHFKLDMQELKKYFVFITDKDSKLHQEGENLGIKCFFIPANVGGRFSILSAVGIVPLCFCGYNAKALLEGAKACFEDFFTHKKDEILQKAYHYCTHKNANINVLFSYSDAFKGFNEWYIQLIAESLGKKQGYKRIGLTPIALIGARDQHSFLQLIMDGPKNKTVTFLKIKDAQKAPIIPDIHFKFLDSLSNKVNLHELLNAQCDATMHALIAENLSVDVIELEKLDAWHAGYLMYYYELFTSTCGVMLGINTYDQPGVEVGKLILKNILNS.

Catalysis depends on Glu259, which acts as the Proton donor. Active-site residues include His284 and Lys397.

This sequence belongs to the GPI family.

It is found in the cytoplasm. It catalyses the reaction alpha-D-glucose 6-phosphate = beta-D-fructose 6-phosphate. It participates in carbohydrate biosynthesis; gluconeogenesis. It functions in the pathway carbohydrate degradation; glycolysis; D-glyceraldehyde 3-phosphate and glycerone phosphate from D-glucose: step 2/4. Its function is as follows. Catalyzes the reversible isomerization of glucose-6-phosphate to fructose-6-phosphate. This Campylobacter jejuni subsp. jejuni serotype O:2 (strain ATCC 700819 / NCTC 11168) protein is Glucose-6-phosphate isomerase.